The primary structure comprises 485 residues: Glutamyl-tRNA(Gln) amidotransferase subunit A 1 (485 aa).

Active-site charge relay system residues include Lys-79 and Ser-154. The active-site Acyl-ester intermediate is the Ser-178.

Belongs to the amidase family. GatA subfamily. As to quaternary structure, heterotrimer of A, B and C subunits.

It catalyses the reaction L-glutamyl-tRNA(Gln) + L-glutamine + ATP + H2O = L-glutaminyl-tRNA(Gln) + L-glutamate + ADP + phosphate + H(+). In terms of biological role, allows the formation of correctly charged Gln-tRNA(Gln) through the transamidation of misacylated Glu-tRNA(Gln) in organisms which lack glutaminyl-tRNA synthetase. The reaction takes place in the presence of glutamine and ATP through an activated gamma-phospho-Glu-tRNA(Gln). The chain is Glutamyl-tRNA(Gln) amidotransferase subunit A 1 (gatA1) from Clostridium acetobutylicum (strain ATCC 824 / DSM 792 / JCM 1419 / IAM 19013 / LMG 5710 / NBRC 13948 / NRRL B-527 / VKM B-1787 / 2291 / W).